The primary structure comprises 238 residues: Endothelin-3 (238 aa).

Residues 1–16 form the signal peptide; sequence MEPGLWLLFGLTVTSA. Residues 17–94 constitute a propeptide that is removed on maturation; the sequence is AGFVPCSQSG…AEGAPEHHRS (78 aa). Residues 24-89 form a disordered region; that stretch reads QSGDAGRRGV…GQEQAAEGAP (66 aa). Cystine bridges form between Cys-97/Cys-111 and Cys-99/Cys-107. A propeptide spanning residues 118-238 is cleaved from the precursor; sequence INTPEQTVPY…PRCLFQEGAP (121 aa). Residues 159–173 are endothelin-like; the sequence is CACVGRYDKACLHFC. Positions 183-219 are disordered; that stretch reads SRTAEKTDKEEEGKVEVKDQQSKQALDLHHPKLMPGS. Positions 185 to 212 are enriched in basic and acidic residues; it reads TAEKTDKEEEGKVEVKDQQSKQALDLHH.

The protein belongs to the endothelin/sarafotoxin family. In terms of tissue distribution, expressed in trophoblasts and placental stem villi vessels, but not in cultured placental smooth muscle cells.

It localises to the secreted. In terms of biological role, endothelins are endothelium-derived vasoconstrictor peptides. The chain is Endothelin-3 (EDN3) from Homo sapiens (Human).